The primary structure comprises 352 residues: Mitochondrial ubiquitin ligase activator of NFKB 1 (352 aa).

The Cytoplasmic portion of the chain corresponds to 1–8; it reads MENGGRPS. A helical transmembrane segment spans residues 9-29; sequence LCQFILLGTTSVVTAALYSVY. Residues 30–238 are Mitochondrial intermembrane-facing; it reads RQKAWVSQEL…LLQRQESSVR (209 aa). A Glycyl lysine isopeptide (Lys-Gly) (interchain with G-Cter in ubiquitin) cross-link involves residue lysine 52. Residues 239–259 form a helical membrane-spanning segment; it reads LWKVLALVFGFATCATLFFIL. At 260–352 the chain is on the cytoplasmic side; it reads RKQYLQRQER…ITRVIPLYNS (93 aa). Glycyl lysine isopeptide (Lys-Gly) (interchain with G-Cter in ubiquitin) cross-links involve residues lysine 273 and lysine 299. Residues 302–340 form an RING-type zinc finger; that stretch reads CVVCLSSFKSCVFLECGHVCSCTECYRALPEPKKCPICR.

As to quaternary structure, homooligomer. Interacts with MAP3K7/TAK1. Interacts with UBC9. Interacts with and sumoylates DNM1L. Interacts with MAVS. Interacts with TP53 (via N-terminus); the interaction leads to ubiquitination and proteasomal degradation of TP53. In terms of processing, ubiquitinated by PRKN during mitophagy, leading to its degradation and enhancement of mitophagy. Deubiquitinated by USP30.

It is found in the mitochondrion outer membrane. The protein resides in the peroxisome. The enzyme catalyses S-ubiquitinyl-[E2 ubiquitin-conjugating enzyme]-L-cysteine + [acceptor protein]-L-lysine = [E2 ubiquitin-conjugating enzyme]-L-cysteine + N(6)-ubiquitinyl-[acceptor protein]-L-lysine.. Its pathway is protein modification; protein ubiquitination. The protein operates within protein modification; protein sumoylation. Exhibits weak E3 ubiquitin-protein ligase activity. E3 ubiquitin ligases accept ubiquitin from an E2 ubiquitin-conjugating enzyme in the form of a thioester and then directly transfer the ubiquitin to targeted substrates. Can ubiquitinate AKT1 preferentially at 'Lys-284' involving 'Lys-48'-linked polyubiquitination and seems to be involved in regulation of Akt signaling by targeting phosphorylated Akt to proteasomal degradation. Mediates polyubiquitination of cytoplasmic TP53 at 'Lys-24' which targets TP53 for proteasomal degradation, thus reducing TP53 levels in the cytoplasm and mitochondrion. Proposed to preferentially act as a SUMO E3 ligase at physiological concentrations. Plays a role in the control of mitochondrial morphology by promoting mitochondrial fragmentation, and influences mitochondrial localization. Likely to promote mitochondrial fission through negatively regulating the mitochondrial fusion proteins MFN1 and MFN2, acting in a pathway that is parallel to the PRKN/PINK1 regulatory pathway. May also be involved in the sumoylation of the membrane fission protein DNM1L. Inhibits cell growth. When overexpressed, activates JNK through MAP3K7/TAK1 and induces caspase-dependent apoptosis. Involved in the modulation of innate immune defense against viruses by inhibiting RIGI-dependent antiviral response. Can mediate RIGI sumoylation and disrupt its polyubiquitination. The polypeptide is Mitochondrial ubiquitin ligase activator of NFKB 1 (MUL1) (Macaca fascicularis (Crab-eating macaque)).